Here is a 251-residue protein sequence, read N- to C-terminus: Triosephosphate isomerase (251 aa).

Substrate is bound at residue 9 to 11 (NWK). The active-site Electrophile is the His95. Glu167 functions as the Proton acceptor in the catalytic mechanism. Substrate is bound by residues Gly173, Ser213, and 234–235 (GG). A Phosphoserine modification is found at Ser213.

This sequence belongs to the triosephosphate isomerase family. In terms of assembly, homodimer.

It is found in the cytoplasm. It catalyses the reaction D-glyceraldehyde 3-phosphate = dihydroxyacetone phosphate. It participates in carbohydrate biosynthesis; gluconeogenesis. Its pathway is carbohydrate degradation; glycolysis; D-glyceraldehyde 3-phosphate from glycerone phosphate: step 1/1. Its function is as follows. Involved in the gluconeogenesis. Catalyzes stereospecifically the conversion of dihydroxyacetone phosphate (DHAP) to D-glyceraldehyde-3-phosphate (G3P). This is Triosephosphate isomerase from Bacillus cereus (strain G9842).